The following is a 227-amino-acid chain: Lipoprotein-releasing system ATP-binding protein LolD (227 aa).

The 219-residue stretch at 8-226 (IEVTNLCKSF…VVHMADGRIT (219 aa)) folds into the ABC transporter domain. Residue 44–51 (GASGAGKT) participates in ATP binding.

The protein belongs to the ABC transporter superfamily. Lipoprotein translocase (TC 3.A.1.125) family. As to quaternary structure, the complex is composed of two ATP-binding proteins (LolD) and two transmembrane proteins (LolC and LolE).

Its subcellular location is the cell inner membrane. In terms of biological role, part of the ABC transporter complex LolCDE involved in the translocation of mature outer membrane-directed lipoproteins, from the inner membrane to the periplasmic chaperone, LolA. Responsible for the formation of the LolA-lipoprotein complex in an ATP-dependent manner. The chain is Lipoprotein-releasing system ATP-binding protein LolD from Syntrophotalea carbinolica (strain DSM 2380 / NBRC 103641 / GraBd1) (Pelobacter carbinolicus).